Consider the following 216-residue polypeptide: Protein GrpE (216 aa).

Disordered regions lie at residues 1-45 (MTEE…LDPT) and 185-216 (RVAVAEPQPGATPAAAKEEKTDDEESGGTEEV). Residues 205 to 216 (TDDEESGGTEEV) are compositionally biased toward acidic residues.

Belongs to the GrpE family. Homodimer.

The protein resides in the cytoplasm. Participates actively in the response to hyperosmotic and heat shock by preventing the aggregation of stress-denatured proteins, in association with DnaK and GrpE. It is the nucleotide exchange factor for DnaK and may function as a thermosensor. Unfolded proteins bind initially to DnaJ; upon interaction with the DnaJ-bound protein, DnaK hydrolyzes its bound ATP, resulting in the formation of a stable complex. GrpE releases ADP from DnaK; ATP binding to DnaK triggers the release of the substrate protein, thus completing the reaction cycle. Several rounds of ATP-dependent interactions between DnaJ, DnaK and GrpE are required for fully efficient folding. This is Protein GrpE from Streptomyces griseus subsp. griseus (strain JCM 4626 / CBS 651.72 / NBRC 13350 / KCC S-0626 / ISP 5235).